Reading from the N-terminus, the 36-residue chain is Pancreatic polypeptide (36 aa).

F36 carries the post-translational modification Phenylalanine amide.

This sequence belongs to the NPY family.

Its subcellular location is the secreted. In terms of biological role, hormone secreted by pancreatic cells that acts as a regulator of pancreatic and gastrointestinal functions. This is Pancreatic polypeptide (ppy) from Rana temporaria (European common frog).